An 86-amino-acid chain; its full sequence is uncharacterized protein (86 aa).

Positions 1–25 (MNLRKILLSSALSLGMLVSAAPVLA) are cleaved as a signal peptide.

This is an uncharacterized protein from Bacillus subtilis (strain 168).